The following is a 93-amino-acid chain: Stage III sporulation protein D (93 aa).

The region spanning tyrosine 4–threonine 75 is the HTH deoR-type domain. Residues lysine 21–aspartate 40 constitute a DNA-binding region (H-T-H motif).

This protein regulates the transcription of sigK, which encodes mother cell chamber RNA polymerase sigma-factor (sigma K). This is Stage III sporulation protein D (spoIIID) from Bacillus subtilis (strain 168).